A 249-amino-acid polypeptide reads, in one-letter code: Protein obstructor-E (249 aa).

The first 21 residues, 1-21 (MAKILISALLCVAMFGSMALG), serve as a signal peptide directing secretion. The 59-residue stretch at 22–80 (SPECPTPNGRFASGDQCDSYTECQDGTPVEKLCPDGLLFHQRTKATGECTYAPYSTCKE) folds into the Chitin-binding type-2 1 domain. Cysteines 54 and 70 form a disulfide. Residue Asn-88 is glycosylated (N-linked (GlcNAc...) asparagine). Chitin-binding type-2 domains follow at residues 90 to 148 (TEEC…SCNA) and 170 to 227 (VDVS…ECYA). 2 disulfides stabilise this stretch: Cys-124–Cys-137 and Cys-203–Cys-216.

Uniformly expressed throughout the cuticle of third instar larva.

Its subcellular location is the secreted. It localises to the extracellular space. The protein localises to the extracellular matrix. Its function is as follows. Chitin-binding protein that is important for the longitudinal contraction and lateral expansion of the larval cuticle during its conversion into the oval-shaped puparium case. Essential for survival to the second instar larval stage. Confers the orientated contractility and expandability of the larval cuticle by regulating the arrangement of chitin and the formation of supracellular ridges on the cuticle of third instar larvae. Essential for determining pupal body shape; required for the orientated shape change of the cuticle during metamorphosis which involves changes in the morphology of the supracellular ridges. Mainly involved in regulating pupal shape. In terms of biological role, mainly involved in larvae survival, possibly by maintaining the normal morphology of the larval hindgut during development. The polypeptide is Protein obstructor-E (Drosophila melanogaster (Fruit fly)).